The following is a 417-amino-acid chain: Serine hydroxymethyltransferase (417 aa).

Residues Leu121 and 125-127 (GHL) contribute to the (6S)-5,6,7,8-tetrahydrofolate site. At Lys229 the chain carries N6-(pyridoxal phosphate)lysine. 355-357 (SPF) contacts (6S)-5,6,7,8-tetrahydrofolate.

It belongs to the SHMT family. As to quaternary structure, homodimer. Pyridoxal 5'-phosphate is required as a cofactor.

Its subcellular location is the cytoplasm. It catalyses the reaction (6R)-5,10-methylene-5,6,7,8-tetrahydrofolate + glycine + H2O = (6S)-5,6,7,8-tetrahydrofolate + L-serine. It functions in the pathway one-carbon metabolism; tetrahydrofolate interconversion. Its pathway is amino-acid biosynthesis; glycine biosynthesis; glycine from L-serine: step 1/1. Functionally, catalyzes the reversible interconversion of serine and glycine with tetrahydrofolate (THF) serving as the one-carbon carrier. This reaction serves as the major source of one-carbon groups required for the biosynthesis of purines, thymidylate, methionine, and other important biomolecules. Also exhibits THF-independent aldolase activity toward beta-hydroxyamino acids, producing glycine and aldehydes, via a retro-aldol mechanism. This is Serine hydroxymethyltransferase from Xylella fastidiosa (strain 9a5c).